Here is a 599-residue protein sequence, read N- to C-terminus: Kinesin light chain 2 (599 aa).

Residues 78–143 (ILALSSHLGA…KQHLLFMSQI (66 aa)) adopt a coiled-coil conformation. Residues 154 to 163 (EKGDVPKDSL) are compositionally biased toward basic and acidic residues. The interval 154-188 (EKGDVPKDSLDDLFPNEDEQSPAPSPGGGDVAAQH) is disordered. A phosphoserine mark is found at Ser174 and Ser178. TPR repeat units lie at residues 197-230 (LRTLHNLVIQYASQGRYEVAVPLCKQALEDLEKT), 239-272 (ATMLNILALVYRDQNKYKDAAHLLNDALAIREKT), 281-314 (AATLNNLAVLYGKRGKYKEAEPLCKRALEIREKV), 323-356 (AKQLSNLALLCQNQGKAEEVEYYYRRALEIYATR), and 365-398 (AKTKNNLASCYLKQGKYQDAETLYKEILTRAHEK). Position 443 is a phosphoserine (Ser443). A TPR 6 repeat occupies 447–480 (NTTLRTLGALYRPEGKLEAAHTLEDCASRSRKQG). Residues 492-541 (LLKDGSGRGHRRGSRDVAGPQSESDLEESGPAAEWSGDGSGSLRRSGSFG) are disordered. 2 positions are modified to phosphoserine: Ser505 and Ser515. The span at 532–541 (GSLRRSGSFG) shows a compositional bias: low complexity. 3 positions are modified to phosphoserine: Ser574, Ser575, and Ser582.

The protein belongs to the kinesin light chain family. Oligomeric complex composed of two heavy chains and two light chains. Interacts (via TPR repeats) with PLEKHM2.

The protein resides in the cytoplasm. It localises to the cytoskeleton. It is found in the lysosome membrane. Its function is as follows. Kinesin is a microtubule-associated force-producing protein that plays a role in organelle transport. The light chain functions in coupling of cargo to the heavy chain or in the modulation of its ATPase activity. Through binding with PLEKHM2 and ARL8B, recruits kinesin-1 to lysosomes and hence direct lysosomes movement toward microtubule plus ends. This is Kinesin light chain 2 from Mus musculus (Mouse).